A 427-amino-acid polypeptide reads, in one-letter code: Heterogeneous nuclear ribonucleoprotein K (427 aa).

Residues 1–34 (METEQQEETFTNTETNGKRPAEDMEEEQAFKRSR) are disordered. Positions 16–34 (NGKRPAEDMEEEQAFKRSR) are enriched in basic and acidic residues. 2 KH domains span residues 39 to 101 (MVEL…LKKI) and 117 to 182 (DCEL…IKII). 2 consecutive repeat copies span residues 51 to 73 (AGAV…NASV) and 56 to 59 (GKGG). The 2 X 22 AA approximate repeats stretch occupies residues 51-385 (AGAVIGKGGK…QIRHESGASI (335 aa)). Positions 56 to 371 (GKGGKNIKAL…LAGSIIGKGG (316 aa)) are 5 X 4 AA repeats of G-X-G-G. The tract at residues 209-246 (YGGFTMMFDDRRGRPVGFPMRGRGGFDRMPPNRGGRPM) is RNA-binding RGG-box. Tandem repeats lie at residues 218–223 (DRRGRP), 230–233 (GRGG), and 240–243 (NRGG). The 2 X 6 AA approximate repeats stretch occupies residues 218–302 (DRRGRPVGFP…LMSYDRRGRP (85 aa)). The segment at 221 to 305 (GRPVGFPMRG…YDRRGRPGDR (85 aa)) is disordered. Positions 249-258 (SRRDYDDMSP) are enriched in basic and acidic residues. 4 repeat units span residues 268–271 (GRGG), 297–302 (DRRGRP), 363–385 (AGSI…GASI), and 368–371 (GKGG). Residues 295–305 (SYDRRGRPGDR) show a composition bias toward basic and acidic residues. The 65-residue stretch at 351–415 (IITTQVTIPK…DQIQNAQYLL (65 aa)) folds into the KH 3 domain.

Its subcellular location is the cytoplasm. The protein resides in the nucleus. It localises to the nucleoplasm. In terms of biological role, one of the major pre-mRNA-binding proteins. Binds tenaciously to poly(C) sequences. Likely to play a role in the nuclear metabolism of hnRNAs, particularly for pre-mRNAs that contain cytidine-rich sequences. Can also bind poly(C) single-stranded DNA. May play an important role in p53/TP53 response to DNA damage, acting at the level of both transcription activation and repression. As part of a ribonucleoprotein complex, may negatively regulate the transcription of genes involved in neuronal differentiation. The sequence is that of Heterogeneous nuclear ribonucleoprotein K (HNRNPK) from Gallus gallus (Chicken).